The following is a 172-amino-acid chain: Stellate protein CG33238 (172 aa).

This sequence belongs to the casein kinase 2 subunit beta family. In terms of assembly, interacts in vitro with the casein kinase 2 alpha subunit (CkII-alpha). The relevance of such interaction is however unclear in vivo. In terms of tissue distribution, probably not expressed in wild-type flies. In males lacking the Y chromosome, it is testis-specific and constitutes the main component of star-shaped crystals.

Unknown. In males lacking the Y chromosome, its strong overexpression leads to the appearance of proteinaceous star-shaped crystals in the primary spermatocytes causing meiotic drive, possibly by interfering with normal casein kinase 2 activity. The sequence is that of Stellate protein CG33238 (Ste:CG33238) from Drosophila melanogaster (Fruit fly).